The sequence spans 766 residues: Phosphoribosylformylglycinamidine synthase subunit PurL (766 aa).

Residue His46 is part of the active site. ATP-binding residues include Tyr49 and Lys88. A Mg(2+)-binding site is contributed by Glu90. Residues 91 to 94 and Arg113 each bind substrate; that span reads SHNH. The active-site Proton acceptor is His92. Asp114 lines the Mg(2+) pocket. Gln237 contacts substrate. Asp265 contacts Mg(2+). 309 to 311 is a binding site for substrate; that stretch reads ESQ. Positions 520 and 557 each coordinate ATP. Asn558 lines the Mg(2+) pocket. Ser560 is a binding site for substrate.

It belongs to the FGAMS family. As to quaternary structure, monomer. Part of the FGAM synthase complex composed of 1 PurL, 1 PurQ and 2 PurS subunits.

Its subcellular location is the cytoplasm. The enzyme catalyses N(2)-formyl-N(1)-(5-phospho-beta-D-ribosyl)glycinamide + L-glutamine + ATP + H2O = 2-formamido-N(1)-(5-O-phospho-beta-D-ribosyl)acetamidine + L-glutamate + ADP + phosphate + H(+). The protein operates within purine metabolism; IMP biosynthesis via de novo pathway; 5-amino-1-(5-phospho-D-ribosyl)imidazole from N(2)-formyl-N(1)-(5-phospho-D-ribosyl)glycinamide: step 1/2. Part of the phosphoribosylformylglycinamidine synthase complex involved in the purines biosynthetic pathway. Catalyzes the ATP-dependent conversion of formylglycinamide ribonucleotide (FGAR) and glutamine to yield formylglycinamidine ribonucleotide (FGAM) and glutamate. The FGAM synthase complex is composed of three subunits. PurQ produces an ammonia molecule by converting glutamine to glutamate. PurL transfers the ammonia molecule to FGAR to form FGAM in an ATP-dependent manner. PurS interacts with PurQ and PurL and is thought to assist in the transfer of the ammonia molecule from PurQ to PurL. In Synechococcus sp. (strain JA-3-3Ab) (Cyanobacteria bacterium Yellowstone A-Prime), this protein is Phosphoribosylformylglycinamidine synthase subunit PurL.